Here is a 107-residue protein sequence, read N- to C-terminus: Anti-adapter protein IraM (107 aa).

Belongs to the IraM/RssC family.

Its subcellular location is the cytoplasm. Its function is as follows. Inhibits RpoS proteolysis by regulating RssB activity, thereby increasing the stability of the sigma stress factor RpoS during magnesium starvation. This chain is Anti-adapter protein IraM, found in Shigella sonnei (strain Ss046).